A 551-amino-acid polypeptide reads, in one-letter code: Protein GPR107 (551 aa).

The signal sequence occupies residues 1 to 33; sequence MAVRVPLGCTGSFCPRLLPLLALLELLVDPSLG. Residues 34 to 262 are Extracellular-facing; the sequence is RVHHLALKDD…YLSAGEIPLP (229 aa). Asparagine 64 carries an N-linked (GlcNAc...) asparagine glycan. Residues 127–183 are disordered; that stretch reads GVKVRSPPEAGKQLPEIVFSKDEKVPSRSQEPAVSSNPKDSKVQRTPDGSKAQRSTV. Positions 153–164 are enriched in polar residues; it reads SRSQEPAVSSNP. The N-linked (GlcNAc...) asparagine glycan is linked to asparagine 209. The helical transmembrane segment at 263 to 283 threads the bilayer; it reads KLYVSMALLFFLSGTVWIHIL. At 284-292 the chain is on the cytoplasmic side; the sequence is RKRRNDVFK. The helical transmembrane segment at 293–313 threads the bilayer; it reads IHWLMAALPFTKSLSLVFHAI. The Extracellular segment spans residues 314-336; it reads DYHYISSQGFPIEGWAVVYYITH. A helical membrane pass occupies residues 337–357; the sequence is LLKGALLFITIALIGTGWAFI. The Cytoplasmic portion of the chain corresponds to 358 to 367; that stretch reads KHILSDKDKK. The chain crosses the membrane as a helical span at residues 368 to 388; sequence IFMIVIPLQVLANVAYIIIES. Residues 389–401 are Extracellular-facing; that stretch reads TEEGTTEYGLWKD. Residues 402–422 form a helical membrane-spanning segment; that stretch reads SLFLVDLLCCGAILFPVVWSI. Over 423–443 the chain is Cytoplasmic; the sequence is RHLQEASATDGKAAINLAKLK. Residues 444–466 traverse the membrane as a helical segment; that stretch reads LFRHYYVLIVCYIYFTRIIAFLL. The Extracellular segment spans residues 467-475; sequence KFAVPFQWK. A helical membrane pass occupies residues 476–495; that stretch reads WLYQLLDETATLVFFVLTGY. The Cytoplasmic portion of the chain corresponds to 496-551; sequence KFRPASDNPYLQLSQEEDDLEMESVVTTSGVMENMKKVKKVSNGAVEPQGSWEGTA.

Belongs to the LU7TM family. Post-translationally, cleaved by FURIN to yield two fragments that remain associated via a disulfide bond. Widely expressed. Not detected in the duodenum, nor in the exocrine pancreas.

It is found in the cell membrane. The protein localises to the golgi apparatus. Its subcellular location is the trans-Golgi network membrane. Its function is as follows. Has been proposed to act as a receptor for neuronostatin, a peptide derived from the somatostatin/SST precursor. Involved in blood sugar regulation through the induction of glucagon in response to low glucose. The chain is Protein GPR107 (Gpr107) from Rattus norvegicus (Rat).